The following is a 457-amino-acid chain: Multidrug resistance protein MdtK (457 aa).

The next 12 membrane-spanning stretches (helical) occupy residues 11-31 (LLAL…MGVV), 53-73 (IWLP…PIVA), 93-113 (WLAT…RFII), 127-147 (AIGF…YQVL), 160-180 (GMII…AFIY), 188-208 (LGGI…FLMM), 243-263 (LPVG…ALLV), 276-296 (IALN…IAAT), 316-336 (ITAL…SIIF), 357-377 (LMLF…GSGV), 387-407 (IFFI…YLLG), and 416-436 (MGPA…AIMM).

The protein belongs to the multi antimicrobial extrusion (MATE) (TC 2.A.66.1) family. MdtK subfamily.

It localises to the cell inner membrane. In terms of biological role, multidrug efflux pump that functions probably as a Na(+)/drug antiporter. This is Multidrug resistance protein MdtK from Proteus mirabilis (strain HI4320).